An 883-amino-acid chain; its full sequence is Mitogen-activated protein kinase kinase kinase YODA (883 aa).

Disordered regions lie at residues Gly-28–Phe-193, Cys-303–Leu-364, and Ser-376–Pro-396. The segment covering Ser-57 to Arg-72 has biased composition (low complexity). A compositionally biased stretch (polar residues) spans Val-94–Gln-105. The segment covering Ser-143–Asp-165 has biased composition (low complexity). Polar residues-rich tracts occupy residues Glu-167–Ser-189 and Arg-314–Ala-328. In terms of domain architecture, Protein kinase spans Trp-400–Val-656. ATP contacts are provided by residues Leu-406–Val-414 and Lys-429. Asp-525 (proton acceptor) is an active-site residue. Disordered stretches follow at residues Gly-712 to Pro-773 and Glu-787 to Gly-838. Over residues Ser-733 to His-756 the composition is skewed to low complexity.

It belongs to the protein kinase superfamily. STE Ser/Thr protein kinase family. MAP kinase kinase kinase subfamily. In terms of assembly, interacts with ASK7. Interacts with BSK12/SSP. Binds to BASL and MPK6. As to expression, expressed in roots, leaves, guard cells, stems, flowers and siliques.

The protein localises to the cytoplasm. It localises to the cell cortex. Its subcellular location is the cell membrane. It carries out the reaction L-seryl-[protein] + ATP = O-phospho-L-seryl-[protein] + ADP + H(+). The enzyme catalyses L-threonyl-[protein] + ATP = O-phospho-L-threonyl-[protein] + ADP + H(+). Contains an N-terminal autoinhibitory domain. In terms of biological role, functions in a MAP kinase cascade that acts as a molecular switch to regulate the first cell fate decisions in the zygote and the early embryo. Promotes elongation of the zygote and development of its basal daughter cell into the extra-embryonic suspensor. In stomatal development, acts downstream of the LRR receptor TMM, but upstream of the MKK4/MKK5-MPK3/MPK6 module to regulate stomatal cell fate before the guard mother cell (GMC) is specified. Plays a central role in both guard cell identity and pattern formation. This MAPK cascade also functions downstream of the ER receptor in regulating coordinated local cell proliferation, which shapes the morphology of plant organs. Upon brassinosteroid signaling, is inhibited by phosphorylation of its auto-inhibitory N-terminal domain by the GSK3-like kinase ASK7. This Arabidopsis thaliana (Mouse-ear cress) protein is Mitogen-activated protein kinase kinase kinase YODA.